The sequence spans 267 residues: tRNA pseudouridine synthase A (267 aa).

The active-site Nucleophile is the aspartate 51. Tyrosine 109 contributes to the substrate binding site.

Belongs to the tRNA pseudouridine synthase TruA family. In terms of assembly, homodimer.

The catalysed reaction is uridine(38/39/40) in tRNA = pseudouridine(38/39/40) in tRNA. In terms of biological role, formation of pseudouridine at positions 38, 39 and 40 in the anticodon stem and loop of transfer RNAs. This is tRNA pseudouridine synthase A from Staphylococcus aureus (strain USA300).